Here is a 242-residue protein sequence, read N- to C-terminus: Uridylate kinase (242 aa).

Residues 15–18 (KISG), glycine 58, and arginine 62 contribute to the ATP site. UMP-binding positions include aspartate 77 and 139-146 (TGNPFFTT). ATP contacts are provided by threonine 166, tyrosine 172, and aspartate 175.

This sequence belongs to the UMP kinase family. In terms of assembly, homohexamer.

It localises to the cytoplasm. It carries out the reaction UMP + ATP = UDP + ADP. It functions in the pathway pyrimidine metabolism; CTP biosynthesis via de novo pathway; UDP from UMP (UMPK route): step 1/1. With respect to regulation, inhibited by UTP. Functionally, catalyzes the reversible phosphorylation of UMP to UDP. In Buchnera aphidicola subsp. Acyrthosiphon pisum (strain APS) (Acyrthosiphon pisum symbiotic bacterium), this protein is Uridylate kinase.